We begin with the raw amino-acid sequence, 393 residues long: 8-amino-7-oxononanoate synthase (393 aa).

A pyridoxal 5'-phosphate-binding site is contributed by glycine 108–phenylalanine 109. Position 133 (histidine 133) interacts with substrate. Pyridoxal 5'-phosphate is bound by residues serine 182, aspartate 207–histidine 210, and threonine 238–lysine 241. Position 241 is an N6-(pyridoxal phosphate)lysine (lysine 241). Threonine 355 contacts substrate.

This sequence belongs to the class-II pyridoxal-phosphate-dependent aminotransferase family. BioF subfamily. In terms of assembly, homodimer. The cofactor is pyridoxal 5'-phosphate.

It carries out the reaction 6-carboxyhexanoyl-[ACP] + L-alanine + H(+) = (8S)-8-amino-7-oxononanoate + holo-[ACP] + CO2. It functions in the pathway cofactor biosynthesis; biotin biosynthesis. Catalyzes the decarboxylative condensation of pimeloyl-[acyl-carrier protein] and L-alanine to produce 8-amino-7-oxononanoate (AON), [acyl-carrier protein], and carbon dioxide. The sequence is that of 8-amino-7-oxononanoate synthase from Petrotoga mobilis (strain DSM 10674 / SJ95).